A 196-amino-acid polypeptide reads, in one-letter code: Holliday junction branch migration complex subunit RuvA (196 aa).

Residues 1–61 are domain I; it reads MYEYFEGIVT…DTGITLYGFQ (61 aa). The domain II stretch occupies residues 62–140; it reads SEDDKGLFLK…DYVARLDRQD (79 aa). Residues 141 to 149 are flexible linker; the sequence is EEQGNISPA. The tract at residues 149 to 196 is domain III; sequence ALNDALLALIALGYTQKEVDRITTKLEEVNADTADQYIKKGLALLLKK.

The protein belongs to the RuvA family. As to quaternary structure, homotetramer. Forms an RuvA(8)-RuvB(12)-Holliday junction (HJ) complex. HJ DNA is sandwiched between 2 RuvA tetramers; dsDNA enters through RuvA and exits via RuvB. An RuvB hexamer assembles on each DNA strand where it exits the tetramer. Each RuvB hexamer is contacted by two RuvA subunits (via domain III) on 2 adjacent RuvB subunits; this complex drives branch migration. In the full resolvosome a probable DNA-RuvA(4)-RuvB(12)-RuvC(2) complex forms which resolves the HJ.

The protein resides in the cytoplasm. In terms of biological role, the RuvA-RuvB-RuvC complex processes Holliday junction (HJ) DNA during genetic recombination and DNA repair, while the RuvA-RuvB complex plays an important role in the rescue of blocked DNA replication forks via replication fork reversal (RFR). RuvA specifically binds to HJ cruciform DNA, conferring on it an open structure. The RuvB hexamer acts as an ATP-dependent pump, pulling dsDNA into and through the RuvAB complex. HJ branch migration allows RuvC to scan DNA until it finds its consensus sequence, where it cleaves and resolves the cruciform DNA. The polypeptide is Holliday junction branch migration complex subunit RuvA (Lactobacillus helveticus (strain DPC 4571)).